A 403-amino-acid chain; its full sequence is N-isopropylammelide isopropyl amidohydrolase (403 aa).

Positions 60, 62, and 217 each coordinate Zn(2+). Catalysis depends on histidine 249, which acts as the Proton donor/acceptor. Aspartate 303 serves as a coordination point for Zn(2+).

This sequence belongs to the metallo-dependent hydrolases superfamily. N-acyl-D-amino-acid deacylase family. In terms of assembly, homotetramer. Requires Zn(2+) as cofactor.

The protein localises to the cytoplasm. It catalyses the reaction N-isopropylammelide + H2O + H(+) = isopropylamine + cyanurate. It participates in xenobiotic degradation; atrazine degradation; cyanurate from atrazine: step 3/3. With respect to regulation, inhibited by N-ethylammeline, N-hydroxyethylammeline, N-isopropylammeline, ammeline and 2-amino-4hydroxy-1,3,5-s-triazine. In terms of biological role, transforms N-isopropylammelide to cyanuric acid and isopropylamine. The sequence is that of N-isopropylammelide isopropyl amidohydrolase (atzC) from Pseudomonas sp. (strain ADP).